The sequence spans 492 residues: Probable cobyric acid synthase (492 aa).

Residues 248–434 form the GATase cobBQ-type domain; sequence PVRIAVVRLP…MHGLFQNPGA (187 aa). Cys-327 acts as the Nucleophile in catalysis. Residue His-426 is part of the active site.

It belongs to the CobB/CobQ family. CobQ subfamily.

Its pathway is cofactor biosynthesis; adenosylcobalamin biosynthesis. In terms of biological role, catalyzes amidations at positions B, D, E, and G on adenosylcobyrinic A,C-diamide. NH(2) groups are provided by glutamine, and one molecule of ATP is hydrogenolyzed for each amidation. This chain is Probable cobyric acid synthase, found in Methanoculleus marisnigri (strain ATCC 35101 / DSM 1498 / JR1).